The primary structure comprises 516 residues: MNSFPWLTIIVVFPILTGSLIFLLPHRGNKVMKWYTLCICILELLLTTYTFCYHFQLDDPLTQLTENYKWIHFFDFYWRLGIDGLSIGPILLTGFITTLATLAAWPVTRDAQLFHFLMLAMYSGQIGSFSSRDLLLFFLMWEFELIPVYLLLSMWGGKKRLYSATKFILYTAGGSIFLLIGVLGIGLYGSNEPTLNFETLANQSYPVALEVIFYVGFLIAFAVKLPIIPLHTWLPDTHGEAHYSTCMLLAGILLKMGAYGLVRINMELLPHAHCLFSPGLIIVGAIQIIYAASTSPGQLNLKKRIAYSSISHMGFIIIGIGSLSDTGLNGAILQIISHGFIGAALFFLAGTSYDRIRLLYLDEMGGMAIPLPKLFTMLSILSMSSLALPGLSGFVAELLVFFGIITSQKYLLMPKILIAFLMAIGMILTPIYSLSMLRQMFYGYKLFNVPNYYFFDSGPRELFVSISLLLPIIGIGIYPDFVLSLSVEKVEAIISHFFFFDSFQEKRINGKRILLV.

A run of 14 helical transmembrane segments spans residues 4–24 (FPWL…IFLL), 37–57 (LCIC…HFQL), 87–107 (IGPI…AWPV), 111–131 (AQLF…SFSS), 134–154 (LLLF…LLSM), 167–187 (FILY…GIGL), 208–228 (ALEV…LPII), 242–262 (HYST…YGLV), 272–292 (AHCL…IYAA), 305–325 (IAYS…SLSD), 330–350 (GAIL…FLAG), 386–406 (LALP…GIIT), 416–436 (ILIA…SLSM), and 462–482 (LFVS…PDFV).

Belongs to the complex I subunit 4 family.

It is found in the plastid. The protein localises to the chloroplast thylakoid membrane. The catalysed reaction is a plastoquinone + NADH + (n+1) H(+)(in) = a plastoquinol + NAD(+) + n H(+)(out). It carries out the reaction a plastoquinone + NADPH + (n+1) H(+)(in) = a plastoquinol + NADP(+) + n H(+)(out). The chain is NAD(P)H-quinone oxidoreductase chain 4, chloroplastic from Oenothera argillicola (Appalachian evening primrose).